The chain runs to 361 residues: Anthranilate phosphoribosyltransferase (361 aa).

Residues Gly101, 104–105, Thr109, 111–114, 129–137, and Ser141 contribute to the 5-phospho-alpha-D-ribose 1-diphosphate site; these read GD, NIST, and KHGNRGVSS. Position 101 (Gly101) interacts with anthranilate. Position 113 (Ser113) interacts with Mg(2+). Asn132 is an anthranilate binding site. Arg187 lines the anthranilate pocket. Residues Asp245 and Glu246 each coordinate Mg(2+).

This sequence belongs to the anthranilate phosphoribosyltransferase family. As to quaternary structure, homodimer. Mg(2+) is required as a cofactor.

It catalyses the reaction N-(5-phospho-beta-D-ribosyl)anthranilate + diphosphate = 5-phospho-alpha-D-ribose 1-diphosphate + anthranilate. It functions in the pathway amino-acid biosynthesis; L-tryptophan biosynthesis; L-tryptophan from chorismate: step 2/5. Catalyzes the transfer of the phosphoribosyl group of 5-phosphorylribose-1-pyrophosphate (PRPP) to anthranilate to yield N-(5'-phosphoribosyl)-anthranilate (PRA). This chain is Anthranilate phosphoribosyltransferase, found in Shewanella denitrificans (strain OS217 / ATCC BAA-1090 / DSM 15013).